The following is a 212-amino-acid chain: Casparian strip membrane protein 1 (212 aa).

The interval 1–28 (MDSSNSTKETGDIPIPVTSSKSSKAAPP) is disordered. The Cytoplasmic segment spans residues 1–49 (MDSSNSTKETGDIPIPVTSSKSSKAAPPPVVAAKAKSTTKQPLVSGWKR). The segment covering 16–28 (PVTSSKSSKAAPP) has biased composition (low complexity). The chain crosses the membrane as a helical span at residues 50 to 70 (GLGIIDFILRICAIAAALAAA). Over 71 to 100 (TAMGTTSQQLPFFTQFFQFKADYNDLPAFT) the chain is Extracellular. Residues 101–121 (FFVIANAMAGAYLVLSLPFSI) form a helical membrane-spanning segment. At 122-133 (LCIVRPHILGAR) the chain is on the cytoplasmic side. Residues 134-154 (LMLLVFDTVAVPLVTAAASAA) traverse the membrane as a helical segment. At 155–186 (ASIVYLAHNGNSDANWVAICRQFNDFCQRVSG) the chain is on the extracellular side. The chain crosses the membrane as a helical span at residues 187-207 (AVVASFITALLFVVLVAVSAV). Residues 208–212 (ALRQK) lie on the Cytoplasmic side of the membrane.

The protein belongs to the Casparian strip membrane proteins (CASP) family. In terms of assembly, homodimer and heterodimers.

The protein localises to the cell membrane. Functionally, regulates membrane-cell wall junctions and localized cell wall deposition. Required for establishment of the Casparian strip membrane domain (CSD) and the subsequent formation of Casparian strips, a cell wall modification of the root endodermis that determines an apoplastic barrier between the intraorganismal apoplasm and the extraorganismal apoplasm and prevents lateral diffusion. This chain is Casparian strip membrane protein 1, found in Helianthus annuus (Common sunflower).